We begin with the raw amino-acid sequence, 439 residues long: Paraneoplastic antigen-like protein 8A (439 aa).

The segment at 213 to 439 is disordered; the sequence is ETPNNWNATE…RRATNESRKV (227 aa). The span at 231–249 shows a compositional bias: basic residues; that stretch reads LVRRAGAKSRSRRKKQKKN. The span at 403 to 419 shows a compositional bias: polar residues; sequence KAPQGQQPAEATASTSR. A compositionally biased stretch (basic and acidic residues) spans 423–439; the sequence is AKPEGSPRRATNESRKV.

The protein belongs to the PNMA family.

The polypeptide is Paraneoplastic antigen-like protein 8A (PNMA8A) (Pongo abelii (Sumatran orangutan)).